The chain runs to 248 residues: UPF0273 protein APE_1505.1 (248 aa).

In terms of domain architecture, KaiC spans 3-247; the sequence is DRVKTGIPGM…VVRIGRRVSI (245 aa). 30 to 37 serves as a coordination point for ATP; that stretch reads GGPGTGKS.

Belongs to the UPF0273 family.

In Aeropyrum pernix (strain ATCC 700893 / DSM 11879 / JCM 9820 / NBRC 100138 / K1), this protein is UPF0273 protein APE_1505.1.